The following is a 116-amino-acid chain: uncharacterized protein (116 aa).

In terms of domain architecture, HTH cro/C1-type spans 6 to 60 (LKKCRKQKKLTQQNMADKLGITRPAYTAYELGSREPDYKTLINISNILDVSLDYL). The segment at residues 17-36 (QQNMADKLGITRPAYTAYEL) is a DNA-binding region (H-T-H motif).

This is an uncharacterized protein from Bacillus subtilis (strain 168).